The sequence spans 211 residues: Superoxide dismutase [Fe] (211 aa).

The Fe cation site is built by H34, H85, D171, and H175.

This sequence belongs to the iron/manganese superoxide dismutase family. Requires Fe cation as cofactor.

The enzyme catalyses 2 superoxide + 2 H(+) = H2O2 + O2. In terms of biological role, destroys superoxide anion radicals which are normally produced within the cells and which are toxic to biological systems. The chain is Superoxide dismutase [Fe] (sod) from Acidianus ambivalens (Desulfurolobus ambivalens).